A 1647-amino-acid chain; its full sequence is Ras GTPase-activating-like protein IQG1 (1647 aa).

The segment at D18–N51 is disordered. The span at T19–T28 shows a compositional bias: low complexity. The segment covering S29–K43 has biased composition (polar residues). At S48 the chain carries Phosphoserine. 3 positions are modified to phosphothreonine: T66, T72, and T82. Phosphoserine is present on residues S83, S91, and S139. Polar residues predominate over residues F143 to T162. A disordered region spans residues F143–S175. Positions P163–S175 are enriched in low complexity. S165, S167, and S169 each carry phosphoserine. Residues L184–L291 enclose the Calponin-homology (CH) domain. Residues P326–H427 are disordered. The span at T342–A355 shows a compositional bias: low complexity. Residue T367 is modified to Phosphothreonine. Residues P368–K379 show a composition bias toward low complexity. S369 bears the Phosphoserine mark. Basic and acidic residues-rich tracts occupy residues K380–L392 and I402–D413. Residues S433 and S440 each carry the phosphoserine modification. IQ domains are found at residues F467–Y478, L528–N539, L556–D567, F586–S597, L616–R627, I642–E653, L672–T683, V734–Y745, and L764–G775. Positions L841–F919 form a coiled coil. Positions P958 to A1223 constitute a Ras-GAP domain. Residues S1064, S1068, S1088, S1383, and S1385 each carry the phosphoserine modification.

As to quaternary structure, interacts with myosin MYO1 and its light chain MLC1. Interacts with BNI1. Interacts with BNR1. Interacts with CLB2. Interacts with CLB4. Interacts with CDC28. Hyperphosphorylated. Phosphorylation is cell cycle-dependent and peaks at the time of cytokinesis. Contains 21 consensus sites for cyclin-dependent kinases (CDKs). At least some of them are phosphorylated by the CLB2-CDC28 kinase complex. Mutation of 15 of the phosphorylation sites to Ala caused both premature assembly and delayed disassembly of the actomyosin ring, blocked interaction with the actin-nucleating proteins BNI1 and BNR1, and resulted in defects in cytokinesis.

The protein resides in the bud neck. In terms of biological role, required for the assembly and the contraction of the actomyosin ring at the bud neck during cytokinesis. The sequence is that of Ras GTPase-activating-like protein IQG1 (IQG1) from Candida albicans (strain SC5314 / ATCC MYA-2876) (Yeast).